The following is a 212-amino-acid chain: Uridine kinase (212 aa).

13 to 20 lines the ATP pocket; sequence GGSGSGKT.

It belongs to the uridine kinase family.

The protein localises to the cytoplasm. It catalyses the reaction uridine + ATP = UMP + ADP + H(+). The enzyme catalyses cytidine + ATP = CMP + ADP + H(+). Its pathway is pyrimidine metabolism; CTP biosynthesis via salvage pathway; CTP from cytidine: step 1/3. It participates in pyrimidine metabolism; UMP biosynthesis via salvage pathway; UMP from uridine: step 1/1. This Bacillus cytotoxicus (strain DSM 22905 / CIP 110041 / 391-98 / NVH 391-98) protein is Uridine kinase.